Consider the following 289-residue polypeptide: MLTRIVLFAITNLAVLILASIVMSLLGVNPTQMSGLLVMALILGFGGSLISLLMSKAIAKHTTGAYVIEQPRNPSQRWLLDTVRRQAEIVGIGMPEVAIYEGPEINAFATGADRNNALVAVSTGLLQNMSQDEAEAVLGHEIAHVANGDMVTMALLQGVLNTFVIVLARVVGGFIDSLLSGNRGSGRGVAYYGIVLVLELLFGLFATIITMWFSRRREFRADEGGAYLAGRNKMIAALERLGINHGQSTLPTQVQAFGIYGGIGEGLRKLFLSHPPLSERIAALRMARE.

Transmembrane regions (helical) follow at residues 5–25 (IVLFAITNLAVLILASIVMSL) and 33–53 (MSGLLVMALILGFGGSLISLL). Histidine 140 is a binding site for Zn(2+). Glutamate 141 is an active-site residue. Histidine 144 is a Zn(2+) binding site. A run of 2 helical transmembrane segments spans residues 155–175 (LLQGVLNTFVIVLARVVGGFI) and 193–213 (GIVLVLELLFGLFATIITMWF). Glutamate 218 contacts Zn(2+).

It belongs to the peptidase M48B family. It depends on Zn(2+) as a cofactor.

It localises to the cell inner membrane. The sequence is that of Protease HtpX from Xylella fastidiosa (strain M12).